Here is a 421-residue protein sequence, read N- to C-terminus: Magnesium transporter MRS2-5 (421 aa).

2 helical membrane passes run 357 to 377 (LLLTAATFVAAIFAAVTAVFG) and 393 to 413 (YVLLITGIGCGFLYFGFVLYF). The Required for magnesium transport activity motif lies at 377 to 379 (GMN).

The protein belongs to the CorA metal ion transporter (MIT) (TC 1.A.35.5) family. In terms of tissue distribution, expressed in the whole plant.

Its subcellular location is the membrane. In terms of biological role, magnesium transporter that may mediate the influx of magnesium. This chain is Magnesium transporter MRS2-5 (MRS2-5), found in Arabidopsis thaliana (Mouse-ear cress).